A 274-amino-acid polypeptide reads, in one-letter code: Protein-export membrane protein SecF (274 aa).

The next 6 helical transmembrane spans lie at 14–34, 121–141, 143–163, 175–197, 217–237, and 247–267; these read LLILTMVFAVICAGSTLALGV, SVKVAVPLALVAVSIVVFAIF, KPLLSAAVLGALALDLVDALG, ASFAGLLMIIGYAVDSNILLSMY, TGITMVATTTAAACALFLLSM, and VVIFGLIADVLNTWIFNAWVI.

Belongs to the SecD/SecF family. SecF subfamily. As to quaternary structure, part of the protein translocation apparatus. Forms a complex with SecD.

It localises to the cell membrane. Functionally, involved in protein export. The chain is Protein-export membrane protein SecF from Methanopyrus kandleri (strain AV19 / DSM 6324 / JCM 9639 / NBRC 100938).